The chain runs to 33 residues: Photosystem II reaction center protein Psb30 (33 aa).

Residues 5-25 (VIAQLASLALIIVLGPLVIGL) traverse the membrane as a helical segment.

This sequence belongs to the Psb30/Ycf12 family. As to quaternary structure, PSII is composed of 1 copy each of membrane proteins PsbA, PsbB, PsbC, PsbD, PsbE, PsbF, PsbH, PsbI, PsbJ, PsbK, PsbL, PsbM, PsbT, PsbX, PsbY, PsbZ, Psb30/Ycf12, peripheral proteins of the oxygen-evolving complex and a large number of cofactors. It forms dimeric complexes.

It localises to the plastid. It is found in the chloroplast thylakoid membrane. Functionally, a core subunit of photosystem II (PSII), probably helps stabilize the reaction center. This chain is Photosystem II reaction center protein Psb30, found in Chara vulgaris (Common stonewort).